A 529-amino-acid polypeptide reads, in one-letter code: MGCVFCKKLEPVATAKEDAGLEGDFRSYGAADHYGPDPTKARPASSFAHIPNYSNFSSQAINPGFLDSGTIRGVSGIGVTLFIALYDYEARTEDDLTFTKGEKFHILNNTEGDWWEARSLSSGKTGCIPSNYVAPVDSIQAEEWYFGKIGRKDAERQLLSPGNPQGAFLIRESETTKGAYSLSIRDWDQTRGDHVKHYKIRKLDMGGYYITTRVQFNSVQELVQHYMEVNDGLCNLLIAPCTIMKPQTLGLAKDAWEISRSSITLERRLGTGCFGDVWLGTWNGSTKVAVKTLKPGTMSPKAFLEEAQVMKLLRHDKLVQLYAVVSEEPIYIVTEFMCHGSLLDFLKNPEGQDLRLPQLVDMAAQVAEGMAYMERMNYIHRDLRAANILVGERLACKIADFGLARLIKDDEYNPCQGSKFPIKWTAPEAALFGRFTIKSDVWSFGILLTELITKGRIPYPGMNKREVLEQVEQGYHMPCPPGCPASLYEAMEQTWRLDPEERPTFEYLQSFLEDYFTSAEPQYQPGDQT.

Residue Gly2 is the site of N-myristoyl glycine attachment. Residues Cys3 and Cys6 are each lipidated (S-palmitoyl cysteine). Tyr34 bears the Phosphotyrosine mark. Residues 77–138 (IGVTLFIALY…PSNYVAPVDS (62 aa)) enclose the SH3 domain. One can recognise an SH2 domain in the interval 144-241 (WYFGKIGRKD…GLCNLLIAPC (98 aa)). Tyr208 carries the post-translational modification Phosphotyrosine. Ser218 carries the phosphoserine modification. Residues 263-516 (ITLERRLGTG…YLQSFLEDYF (254 aa)) enclose the Protein kinase domain. Residues 269-277 (LGTGCFGDV) and Lys291 contribute to the ATP site. The active-site Proton acceptor is the Asp382. Tyr412 is subject to Phosphotyrosine. A Phosphotyrosine; by SRC modification is found at Tyr523.

Belongs to the protein kinase superfamily. Tyr protein kinase family. SRC subfamily. Interacts with ITGB1, ITGB2, MS4A2/FCER1B, FCER1G, FCGR2A and/or FCGR2B. Interacts (via SH2 domain) with SYK (tyrosine phosphorylated). Interacts (via SH2 domain) with FLT3 (tyrosine phosphorylated). Interacts with PTK2/FAK1. Interacts (via SH2 domain) with HCLS1 (tyrosine phosphorylated by SYK). Interacts with SIRPA and PTPNS1. Interacts (not phosphorylated on tyrosine residues) with CBL; FGR tyrosine phosphorylation promotes dissociation. Interacts with PIK3R1 and FASLG. Interacts with CLNK. In terms of processing, ubiquitinated. Becomes ubiquitinated in response to ITGB2 signaling; this does not lead to degradation. Post-translationally, phosphorylated. Autophosphorylated on tyrosine residues. Becomes phosphorylated in response to FCGR2A and/or FCGR2B engagement, cell adhesion and signaling by ITGB2. Prior phosphorylation at Tyr-523 by SRC inhibits ulterior autophosphorylation at Tyr-412. As to expression, detected in neutrophils, monocytes and natural killer cells (at protein level). Detected in monocytes and large lymphocytes.

The protein resides in the cell membrane. It is found in the cell projection. It localises to the ruffle membrane. The protein localises to the cytoplasm. Its subcellular location is the cytosol. The protein resides in the cytoskeleton. It is found in the mitochondrion inner membrane. It localises to the mitochondrion intermembrane space. The enzyme catalyses L-tyrosyl-[protein] + ATP = O-phospho-L-tyrosyl-[protein] + ADP + H(+). With respect to regulation, activated by autophosphorylation. Prior phosphorylation at Tyr-523 by SRC inhibits ulterior autophosphorylation at Tyr-412. Activated by phorbol myristate acetate, phosphatidic acid and poly-Lys. Binding (via SH2 domain) of HCLS1 that is already phosphorylated by SYK strongly increases kinase activity. In terms of biological role, non-receptor tyrosine-protein kinase that transmits signals from cell surface receptors devoid of kinase activity and contributes to the regulation of immune responses, including neutrophil, monocyte, macrophage and mast cell functions, cytoskeleton remodeling in response to extracellular stimuli, phagocytosis, cell adhesion and migration. Promotes mast cell degranulation, release of inflammatory cytokines and IgE-mediated anaphylaxis. Acts downstream of receptors that bind the Fc region of immunoglobulins, such as MS4A2/FCER1B, FCGR2A and/or FCGR2B. Acts downstream of ITGB1 and ITGB2, and regulates actin cytoskeleton reorganization, cell spreading and adhesion. Depending on the context, activates or inhibits cellular responses. Functions as a negative regulator of ITGB2 signaling, phagocytosis and SYK activity in monocytes. Required for normal ITGB1 and ITGB2 signaling, normal cell spreading and adhesion in neutrophils and macrophages. Functions as a positive regulator of cell migration and regulates cytoskeleton reorganization via RAC1 activation. Phosphorylates SYK (in vitro) and promotes SYK-dependent activation of AKT1 and MAP kinase signaling. Phosphorylates PLD2 in antigen-stimulated mast cells, leading to PLD2 activation and the production of the signaling molecules lysophosphatidic acid and diacylglycerol. Promotes activation of PIK3R1. Phosphorylates FASLG, and thereby regulates its ubiquitination and subsequent internalization. Phosphorylates ABL1. Promotes phosphorylation of CBL, CTTN, PIK3R1, PTK2/FAK1, PTK2B/PYK2 and VAV2. Phosphorylates HCLS1 that has already been phosphorylated by SYK, but not unphosphorylated HCLS1. Together with CLNK, it acts as a negative regulator of natural killer cell-activating receptors and inhibits interferon-gamma production. The protein is Tyrosine-protein kinase Fgr (FGR) of Homo sapiens (Human).